The sequence spans 509 residues: Bifunctional purine biosynthesis protein PurH (509 aa).

An MGS-like domain is found at 1–144; the sequence is MKRALISVSD…KNYAAVTVVV (144 aa).

Belongs to the PurH family.

The catalysed reaction is (6R)-10-formyltetrahydrofolate + 5-amino-1-(5-phospho-beta-D-ribosyl)imidazole-4-carboxamide = 5-formamido-1-(5-phospho-D-ribosyl)imidazole-4-carboxamide + (6S)-5,6,7,8-tetrahydrofolate. It carries out the reaction IMP + H2O = 5-formamido-1-(5-phospho-D-ribosyl)imidazole-4-carboxamide. It functions in the pathway purine metabolism; IMP biosynthesis via de novo pathway; 5-formamido-1-(5-phospho-D-ribosyl)imidazole-4-carboxamide from 5-amino-1-(5-phospho-D-ribosyl)imidazole-4-carboxamide (10-formyl THF route): step 1/1. The protein operates within purine metabolism; IMP biosynthesis via de novo pathway; IMP from 5-formamido-1-(5-phospho-D-ribosyl)imidazole-4-carboxamide: step 1/1. The chain is Bifunctional purine biosynthesis protein PurH from Listeria welshimeri serovar 6b (strain ATCC 35897 / DSM 20650 / CCUG 15529 / CIP 8149 / NCTC 11857 / SLCC 5334 / V8).